The chain runs to 234 residues: Octanoyltransferase (234 aa).

Positions 50 to 234 constitute a BPL/LPL catalytic domain; the sequence is GEAPELVWLL…AFEQVFGPTR (185 aa). Substrate-binding positions include 88 to 95, 163 to 165, and 176 to 178; these read RGGQITYH, AIG, and GIA. The Acyl-thioester intermediate role is filled by Cys194.

It belongs to the LipB family.

The protein resides in the cytoplasm. It carries out the reaction octanoyl-[ACP] + L-lysyl-[protein] = N(6)-octanoyl-L-lysyl-[protein] + holo-[ACP] + H(+). It participates in protein modification; protein lipoylation via endogenous pathway; protein N(6)-(lipoyl)lysine from octanoyl-[acyl-carrier-protein]: step 1/2. Functionally, catalyzes the transfer of endogenously produced octanoic acid from octanoyl-acyl-carrier-protein onto the lipoyl domains of lipoate-dependent enzymes. Lipoyl-ACP can also act as a substrate although octanoyl-ACP is likely to be the physiological substrate. The protein is Octanoyltransferase of Rhodopseudomonas palustris (strain BisA53).